The primary structure comprises 250 residues: MAAGTSNYWEDLRKQARQLENELDLKLVSFSKLCTSYSHSGSRDGGRDRYSSDTTPLLNGSSQDRMFETMAIEIEQLLARLTGVNDKMAEYTHSAGVPSLNAALMHTLQRHRDILQDYTHEFHKTKANFTAIRERENLMGSVRKDIESYKSGSGVNNRRTELFLKEHDHLRNSDRLIEETISIAMATKENMTSQRGMLKSIHSKMNTLANRFPAVNSLIQRINLRKRRDSLILGGVIGICTILLLLYAFH.

Position 2 is an N-acetylalanine (alanine 2). The Cytoplasmic segment spans residues 2 to 229 (AAGTSNYWED…QRINLRKRRD (228 aa)). The stretch at 9–27 (WEDLRKQARQLENELDLKL) forms a coiled coil. Residues 37–59 (YSHSGSRDGGRDRYSSDTTPLLN) form a disordered region. Over residues 41-51 (GSRDGGRDRYS) the composition is skewed to basic and acidic residues. A coiled-coil region spans residues 72–93 (IEIEQLLARLTGVNDKMAEYTH). The residue at position 141 (serine 141) is a Phosphoserine. Residues 230-250 (SLILGGVIGICTILLLLYAFH) traverse the membrane as a helical; Anchor for type IV membrane protein segment.

The protein belongs to the GOSR1 family. Component of several multiprotein Golgi SNARE complexes. Identified in a SNARE complex with BET1, STX5 and YKT6, in a SNARE complex with BET1L, STX5 and YKT6, in a SNARE complex with STX5, GOSR2, SEC22B and BET1, and in complex with STX5 and COG3. Interacts with GABARAPL2.

It localises to the golgi apparatus membrane. Involved in transport from the ER to the Golgi apparatus as well as in intra-Golgi transport. It belongs to a super-family of proteins called t-SNAREs or soluble NSF (N-ethylmaleimide-sensitive factor) attachment protein receptor. May play a protective role against hydrogen peroxide induced cytotoxicity under glutathione depleted conditions in neuronal cells by regulating the intracellular ROS levels via inhibition of p38 MAPK (MAPK11, MAPK12, MAPK13 and MAPK14). Participates in docking and fusion stage of ER to cis-Golgi transport. Plays an important physiological role in VLDL-transport vesicle-Golgi fusion and thus in VLDL delivery to the hepatic cis-Golgi. This chain is Golgi SNAP receptor complex member 1 (Gosr1), found in Mus musculus (Mouse).